We begin with the raw amino-acid sequence, 208 residues long: Large ribosomal subunit protein bL25 (208 aa).

Residues 1 to 20 (MANHQIKAQRRKDEGKGASR) are disordered.

This sequence belongs to the bacterial ribosomal protein bL25 family. CTC subfamily. Part of the 50S ribosomal subunit; part of the 5S rRNA/L5/L18/L25 subcomplex. Contacts the 5S rRNA. Binds to the 5S rRNA independently of L5 and L18.

In terms of biological role, this is one of the proteins that binds to the 5S RNA in the ribosome where it forms part of the central protuberance. This is Large ribosomal subunit protein bL25 from Xylella fastidiosa (strain 9a5c).